Reading from the N-terminus, the 347-residue chain is MRFVKVFEEAIDPGAVAELLESFLTRFELVQLVSPAWEELAYYEKNTRDFLFPEPRLASSHLGMQREVLMKTAIWFPGIAPKIEFSTRTAILECVFPCKNRFICEERCRLERSVSKSHGQRVQATNRKKKPKEKDSDQLPKGTQSRLPSPQRLHLHRPTQRNHGKSFKFPGERKPPFVVRHVDSGNPFGENNLEHCSKKSRRKPKLINFDLSKKRASSLDSLEANIKVIREPDERIVLKSQPPPPVDSSESRKPSLSHQGDASLHTETSVTTSQLSRPPSPLNQPLLQERFQPFSQSTWQKIPEGVRSLLTSHRAHPKDSFISETNSIHERPSYPLKKHLLRAQRYF.

A disordered region spans residues 115–199 (SKSHGQRVQA…ENNLEHCSKK (85 aa)). Over residues 116 to 125 (KSHGQRVQAT) the composition is skewed to polar residues. A compositionally biased stretch (basic residues) spans 153–166 (LHLHRPTQRNHGKS). Basic and acidic residues predominate over residues 170–183 (PGERKPPFVVRHVD). 2 positions are modified to phosphoserine: serine 218 and serine 221. The interval 234–285 (ERIVLKSQPPPPVDSSESRKPSLSHQGDASLHTETSVTTSQLSRPPSPLNQP) is disordered. Residues 254–277 (PSLSHQGDASLHTETSVTTSQLSR) show a composition bias toward polar residues.

Belongs to the SPATA6 family.

The chain is Spermatogenesis associated 6-like protein (Spata6l) from Mus musculus (Mouse).